The chain runs to 543 residues: CTP synthase (543 aa).

The tract at residues 1–265 (MARYIFITGG…DGEVLRHFGL (265 aa)) is amidoligase domain. Ser-13 provides a ligand contact to CTP. Ser-13 contacts UTP. 14-19 (SLGKGL) is a binding site for ATP. Tyr-54 provides a ligand contact to L-glutamine. Asp-71 contacts ATP. 2 residues coordinate Mg(2+): Asp-71 and Glu-139. Residues 146-148 (DIE), 186-191 (KTKPTQ), and Lys-222 contribute to the CTP site. UTP-binding positions include 186–191 (KTKPTQ) and Lys-222. One can recognise a Glutamine amidotransferase type-1 domain in the interval 290–542 (TIGVVGKYVG…IAAAVKQARL (253 aa)). Gly-354 is an L-glutamine binding site. Cys-381 functions as the Nucleophile; for glutamine hydrolysis in the catalytic mechanism. Residues 382 to 385 (LGMQ), Glu-405, and Arg-470 contribute to the L-glutamine site. Active-site residues include His-515 and Glu-517.

Belongs to the CTP synthase family. As to quaternary structure, homotetramer.

The catalysed reaction is UTP + L-glutamine + ATP + H2O = CTP + L-glutamate + ADP + phosphate + 2 H(+). It carries out the reaction L-glutamine + H2O = L-glutamate + NH4(+). The enzyme catalyses UTP + NH4(+) + ATP = CTP + ADP + phosphate + 2 H(+). The protein operates within pyrimidine metabolism; CTP biosynthesis via de novo pathway; CTP from UDP: step 2/2. With respect to regulation, allosterically activated by GTP, when glutamine is the substrate; GTP has no effect on the reaction when ammonia is the substrate. The allosteric effector GTP functions by stabilizing the protein conformation that binds the tetrahedral intermediate(s) formed during glutamine hydrolysis. Inhibited by the product CTP, via allosteric rather than competitive inhibition. In terms of biological role, catalyzes the ATP-dependent amination of UTP to CTP with either L-glutamine or ammonia as the source of nitrogen. Regulates intracellular CTP levels through interactions with the four ribonucleotide triphosphates. The sequence is that of CTP synthase from Novosphingobium aromaticivorans (strain ATCC 700278 / DSM 12444 / CCUG 56034 / CIP 105152 / NBRC 16084 / F199).